We begin with the raw amino-acid sequence, 37 residues long: Kappa-actitoxin-Bgr1a (37 aa).

The region spanning 2-37 is the ShKT domain; the sequence is CRDWFKETACRHAKSLGNCRTSQKYRANCAKTCELC. 3 disulfide bridges follow: C2-C37, C11-C30, and C20-C34. Residues 25–26 are crucial for binding to potassium channels; that stretch reads KY.

It belongs to the sea anemone type 1 potassium channel toxin family. Type 1b subfamily.

Its subcellular location is the secreted. The protein resides in the nematocyst. Its function is as follows. Inhibits voltage-dependent potassium channels of the Kv1 family (Kv1.1/KCNA1 (Kd=6 nM), Kv1.2/KCNA2 (Kd=15 nM), Kv1.3/KCNA3 (Kd=10-39 nM), Kv1.6/KCNA6, and KCa3.1/KCNN4 (Kd=172 nM)). The protein is Kappa-actitoxin-Bgr1a of Bunodosoma granuliferum (Red warty sea anemone).